A 230-amino-acid chain; its full sequence is PKHD-type hydroxylase XF_0598 (230 aa).

Positions 78–182 constitute a Fe2OG dioxygenase domain; it reads RTLPPRFNCY…RIASFFWVQS (105 aa). 3 residues coordinate Fe cation: His96, Asp98, and His163. Arg173 contributes to the 2-oxoglutarate binding site.

It depends on Fe(2+) as a cofactor. The cofactor is L-ascorbate.

The sequence is that of PKHD-type hydroxylase XF_0598 from Xylella fastidiosa (strain 9a5c).